Consider the following 92-residue polypeptide: MPTNSIVTIRYGPYDSCGIVDHRTFRLDGLQAVLKGDGHRYVLEKTDDWNTVELIVNGERVYTCNITDLVFGGDGRLDPLCQEAIDAVREAY.

It belongs to the UPF0728 family.

This is UPF0728 protein C10orf53 homolog from Danio rerio (Zebrafish).